Reading from the N-terminus, the 739-residue chain is POU domain, class 2, transcription factor 1 (739 aa).

Residues 1 to 11 show a composition bias toward polar residues; that stretch reads MNNPSETSKPS. Disordered stretches follow at residues 1–39, 67–95, 253–277, 353–378, and 489–553; these read MNNP…GGPI, SLNV…SVQA, TPIQ…EEPS, DSTL…RRKK, and SVTG…SSPL. Positions 81-95 are enriched in low complexity; the sequence is SQQPSQPSQQPSVQA. The POU-specific domain maps to 274 to 348; that stretch reads EEPSDLEELE…LLEKWLNDAE (75 aa). The span at 353–364 shows a compositional bias: low complexity; the sequence is DSTLSSPSALNS. The segment at residues 375–434 is a DNA-binding region (homeobox); the sequence is RRKKRTSIETNIRVALEKSFLENQKPTSEEITMIADQLNMEKEVIRVWFCNRRQKEKRIN. Over residues 489 to 552 the composition is skewed to low complexity; sequence SVTGTTETTS…QTTSTPLSSP (64 aa).

It belongs to the POU transcription factor family. Class-2 subfamily. As to quaternary structure, interacts with NR3C1, AR and PGR.

The protein localises to the nucleus. Functionally, transcription factor that binds to the octamer motif (5'-ATTTGCAT-3') and activates the promoters of the genes for some small nuclear RNAs (snRNA) and of genes such as those for histone H2B and immunoglobulins. Modulates transcription transactivation by NR3C1, AR and PGR. In Gallus gallus (Chicken), this protein is POU domain, class 2, transcription factor 1 (POU2F1).